The sequence spans 91 residues: Large ribosomal subunit protein eL34 (91 aa).

The tract at residues 48–69 (RGRPVEMRKLPKTKKRPERPMP) is disordered.

Belongs to the eukaryotic ribosomal protein eL34 family.

This is Large ribosomal subunit protein eL34 (rpl34e) from Pyrococcus horikoshii (strain ATCC 700860 / DSM 12428 / JCM 9974 / NBRC 100139 / OT-3).